Consider the following 1180-residue polypeptide: RecBCD enzyme subunit RecB (1180 aa).

The DNA-binding and helicase activity, interacts with RecC stretch occupies residues 1 to 852 (MITTIPKSIN…QSGKNHISTK (852 aa)). A UvrD-like helicase ATP-binding domain is found at 3–448 (TTIPKSINVT…YFLDTNWRSS (446 aa)). Residue 24-31 (ASAGTGKT) participates in ATP binding. The region spanning 478-745 (SSRINKTTKF…KIVSIHKSKG (268 aa)) is the UvrD-like helicase C-terminal domain. Positions 905 to 1180 (NYNFTSYSQL…EIIKKLEQIF (276 aa)) are nuclease activity, interacts with RecD and RecA. Mg(2+) is bound by residues His-964, Asp-1075, and Asp-1088. Asp-1088 functions as the For nuclease activity in the catalytic mechanism.

Belongs to the helicase family. UvrD subfamily. As to quaternary structure, heterotrimer of RecB, RecC and RecD. All subunits contribute to DNA-binding. Interacts with RecA. Mg(2+) is required as a cofactor.

It carries out the reaction Exonucleolytic cleavage (in the presence of ATP) in either 5'- to 3'- or 3'- to 5'-direction to yield 5'-phosphooligonucleotides.. It catalyses the reaction Couples ATP hydrolysis with the unwinding of duplex DNA by translocating in the 3'-5' direction.. The enzyme catalyses ATP + H2O = ADP + phosphate + H(+). Functionally, a helicase/nuclease that prepares dsDNA breaks (DSB) for recombinational DNA repair. Binds to DSBs and unwinds DNA via a highly rapid and processive ATP-dependent bidirectional helicase activity. Unwinds dsDNA until it encounters a Chi (crossover hotspot instigator) sequence from the 3' direction. Cuts ssDNA a few nucleotides 3' to the Chi site. The properties and activities of the enzyme are changed at Chi. The Chi-altered holoenzyme produces a long 3'-ssDNA overhang and facilitates RecA-binding to the ssDNA for homologous DNA recombination and repair. Holoenzyme degrades any linearized DNA that is unable to undergo homologous recombination. In the holoenzyme this subunit contributes ATPase, 3'-5' helicase, exonuclease activity and loads RecA onto ssDNA. The chain is RecBCD enzyme subunit RecB from Buchnera aphidicola subsp. Baizongia pistaciae (strain Bp).